A 74-amino-acid polypeptide reads, in one-letter code: Heat shock factor-binding protein 1-like protein 1 (74 aa).

Positions 12 to 65 form a coiled coil; the sequence is RALRDAAENLFQELQEHFQALTATLNLRMEEMGNRIEDLQKNVKDLMVQAGIEN.

The protein belongs to the HSBP1 family.

This chain is Heat shock factor-binding protein 1-like protein 1 (HSBP1L1), found in Homo sapiens (Human).